A 218-amino-acid chain; its full sequence is 3-isopropylmalate dehydratase small subunit (218 aa).

This sequence belongs to the LeuD family. LeuD type 1 subfamily. As to quaternary structure, heterodimer of LeuC and LeuD.

The enzyme catalyses (2R,3S)-3-isopropylmalate = (2S)-2-isopropylmalate. It functions in the pathway amino-acid biosynthesis; L-leucine biosynthesis; L-leucine from 3-methyl-2-oxobutanoate: step 2/4. Its function is as follows. Catalyzes the isomerization between 2-isopropylmalate and 3-isopropylmalate, via the formation of 2-isopropylmaleate. The chain is 3-isopropylmalate dehydratase small subunit from Alkalilimnicola ehrlichii (strain ATCC BAA-1101 / DSM 17681 / MLHE-1).